The primary structure comprises 156 residues: uncharacterized protein (156 aa).

Residue H55 is part of the active site.

This sequence belongs to the thioester dehydratase family. FabZ subfamily.

This is an uncharacterized protein from Halalkalibacterium halodurans (strain ATCC BAA-125 / DSM 18197 / FERM 7344 / JCM 9153 / C-125) (Bacillus halodurans).